The sequence spans 232 residues: Phycobilisome rod-core linker polypeptide cpcG (232 aa).

A PBS-linker domain is found at 11–191 (STQNQRVDGY…PRYGADFKEK (181 aa)).

This sequence belongs to the phycobilisome linker protein family. In terms of assembly, the phycobilisome is a hemidiscoidal structure that is composed of two distinct substructures: a core complex and a number of rods radiating from the core.

It localises to the plastid. The protein resides in the chloroplast. The protein localises to the chloroplast thylakoid membrane. Its function is as follows. Rod-core linker protein required for attachment of phycocyanin to allophycocyanin in cores of phycobilisomes. Functionally, linker polypeptides determine the state of aggregation and the location of the disk-shaped phycobiliprotein units within the phycobilisome and modulate their spectroscopic properties in order to mediate a directed and optimal energy transfer. This is Phycobilisome rod-core linker polypeptide cpcG (cpcG) from Pyropia yezoensis (Susabi-nori).